Here is a 358-residue protein sequence, read N- to C-terminus: 3-isopropylmalate dehydrogenase (358 aa).

An NAD(+)-binding site is contributed by 77–90; it reads GPKWTHLPPDQQPE. Substrate is bound by residues Arg-98, Arg-108, Arg-137, and Asp-226. Mg(2+) contacts are provided by Asp-226, Asp-250, and Asp-254. 284-296 lines the NAD(+) pocket; it reads GSAPDIAGKGIAN.

The protein belongs to the isocitrate and isopropylmalate dehydrogenases family. LeuB type 1 subfamily. In terms of assembly, homodimer. The cofactor is Mg(2+). Mn(2+) is required as a cofactor.

Its subcellular location is the cytoplasm. It catalyses the reaction (2R,3S)-3-isopropylmalate + NAD(+) = 4-methyl-2-oxopentanoate + CO2 + NADH. Its pathway is amino-acid biosynthesis; L-leucine biosynthesis; L-leucine from 3-methyl-2-oxobutanoate: step 3/4. Catalyzes the oxidation of 3-carboxy-2-hydroxy-4-methylpentanoate (3-isopropylmalate) to 3-carboxy-4-methyl-2-oxopentanoate. The product decarboxylates to 4-methyl-2 oxopentanoate. The chain is 3-isopropylmalate dehydrogenase from Mannheimia succiniciproducens (strain KCTC 0769BP / MBEL55E).